Reading from the N-terminus, the 28-residue chain is Humanin-like 2 (28 aa).

Belongs to the humanin family. In terms of tissue distribution, highly expressed in testis. Also expressed in kidney, heart, skeletal muscles and brain.

The protein resides in the secreted. Its subcellular location is the cytoplasm. Its function is as follows. Plays a role as a neuroprotective and antiapoptotic factor. The polypeptide is Humanin-like 2 (Homo sapiens (Human)).